Consider the following 549-residue polypeptide: Glucose-6-phosphate isomerase (549 aa).

Glu355 serves as the catalytic Proton donor. Residues His387 and Lys515 contribute to the active site.

It belongs to the GPI family.

It localises to the cytoplasm. It catalyses the reaction alpha-D-glucose 6-phosphate = beta-D-fructose 6-phosphate. The protein operates within carbohydrate biosynthesis; gluconeogenesis. It functions in the pathway carbohydrate degradation; glycolysis; D-glyceraldehyde 3-phosphate and glycerone phosphate from D-glucose: step 2/4. Its function is as follows. Catalyzes the reversible isomerization of glucose-6-phosphate to fructose-6-phosphate. The chain is Glucose-6-phosphate isomerase from Haemophilus influenzae (strain PittEE).